Here is a 385-residue protein sequence, read N- to C-terminus: Pre-mRNA-splicing factor slt-11 (385 aa).

The segment at 157–233 (RKGREVDEEG…PPGPKDWLPP (77 aa)) is disordered. The segment covering 171 to 187 (GSSSGAGRATGGNPAVG) has biased composition (low complexity). Residues 239–312 (MSLFVTGIED…CPLRVRWSVP (74 aa)) enclose the RRM domain. Residues 320 to 331 (KEQRSEMLRDGR) are compositionally biased toward basic and acidic residues. The tract at residues 320 to 370 (KEQRSEMLRDGRSAFGSGQKTGGQKAIGGQNAQGGASGAQKDDASNLTIAA) is disordered.

The protein belongs to the SLT11 family. Associated with the spliceosome.

It is found in the nucleus. Functionally, involved in pre-mRNA splicing. Facilitates the cooperative formation of U2/U6 helix II in association with stem II in the spliceosome. Binds to RNA. The sequence is that of Pre-mRNA-splicing factor slt-11 (slt-11) from Neurospora crassa (strain ATCC 24698 / 74-OR23-1A / CBS 708.71 / DSM 1257 / FGSC 987).